We begin with the raw amino-acid sequence, 148 residues long: 3-dehydroquinate dehydratase (148 aa).

Tyr24 acts as the Proton acceptor in catalysis. Residues Asn80, His86, and Asp93 each coordinate substrate. The active-site Proton donor is the His106. Substrate contacts are provided by residues 107–108 (IS) and Arg117.

This sequence belongs to the type-II 3-dehydroquinase family. As to quaternary structure, homododecamer.

The catalysed reaction is 3-dehydroquinate = 3-dehydroshikimate + H2O. The protein operates within metabolic intermediate biosynthesis; chorismate biosynthesis; chorismate from D-erythrose 4-phosphate and phosphoenolpyruvate: step 3/7. Functionally, catalyzes a trans-dehydration via an enolate intermediate. The protein is 3-dehydroquinate dehydratase of Acidovorax sp. (strain JS42).